We begin with the raw amino-acid sequence, 88 residues long: Protein MATERNALLY EXPRESSED GENE 1 (88 aa).

Residues 1-27 form the signal peptide; it reads MEYKKRVDALVFFSLLLLGYFAAHAHG. Asn36 carries N-linked (GlcNAc...) asparagine glycosylation. Disulfide bonds link Cys65–Cys87 and Cys68–Cys76.

The protein belongs to the MEG family. Post-translationally, glycosylated. In terms of tissue distribution, expressed exclusively in endosperm. Found in basal endosperm transfer cells.

Its subcellular location is the secreted. The protein localises to the cell wall. It is found in the cell membrane. It localises to the extracellular space. The protein resides in the extracellular matrix. Regulates maternal nutrient uptake, sucrose partitioning, and seed biomass yield. Necessary and sufficient for the establishment and differentiation of the endosperm nutrient transfer cells located at the mother:seed interface. Exclusive expression of the maternal allele at the early stages of endosperm development. The maternal allele is hypomethylated. At later stages, expression becomes biallelic. Regulated by the transcription factor MRP1. This Zea mays (Maize) protein is Protein MATERNALLY EXPRESSED GENE 1 (MEG1).